The following is a 346-amino-acid chain: Biotin synthase (346 aa).

The Radical SAM core domain maps to 41 to 265 (NEVQISTLLS…MMPHSYVRLS (225 aa)). [4Fe-4S] cluster is bound by residues C56, C60, and C63. 4 residues coordinate [2Fe-2S] cluster: C100, C131, C191, and R263.

The protein belongs to the radical SAM superfamily. Biotin synthase family. As to quaternary structure, homodimer. The cofactor is [4Fe-4S] cluster. It depends on [2Fe-2S] cluster as a cofactor.

It carries out the reaction (4R,5S)-dethiobiotin + (sulfur carrier)-SH + 2 reduced [2Fe-2S]-[ferredoxin] + 2 S-adenosyl-L-methionine = (sulfur carrier)-H + biotin + 2 5'-deoxyadenosine + 2 L-methionine + 2 oxidized [2Fe-2S]-[ferredoxin]. It participates in cofactor biosynthesis; biotin biosynthesis; biotin from 7,8-diaminononanoate: step 2/2. Functionally, catalyzes the conversion of dethiobiotin (DTB) to biotin by the insertion of a sulfur atom into dethiobiotin via a radical-based mechanism. The sequence is that of Biotin synthase from Pseudoalteromonas translucida (strain TAC 125).